The sequence spans 226 residues: Leucyl/phenylalanyl-tRNA--protein transferase (226 aa).

The protein belongs to the L/F-transferase family.

It localises to the cytoplasm. It catalyses the reaction N-terminal L-lysyl-[protein] + L-leucyl-tRNA(Leu) = N-terminal L-leucyl-L-lysyl-[protein] + tRNA(Leu) + H(+). The catalysed reaction is N-terminal L-arginyl-[protein] + L-leucyl-tRNA(Leu) = N-terminal L-leucyl-L-arginyl-[protein] + tRNA(Leu) + H(+). It carries out the reaction L-phenylalanyl-tRNA(Phe) + an N-terminal L-alpha-aminoacyl-[protein] = an N-terminal L-phenylalanyl-L-alpha-aminoacyl-[protein] + tRNA(Phe). In terms of biological role, functions in the N-end rule pathway of protein degradation where it conjugates Leu, Phe and, less efficiently, Met from aminoacyl-tRNAs to the N-termini of proteins containing an N-terminal arginine or lysine. The polypeptide is Leucyl/phenylalanyl-tRNA--protein transferase (Pseudomonas fluorescens (strain SBW25)).